The primary structure comprises 225 residues: Uracil-DNA glycosylase (225 aa).

D65 functions as the Proton acceptor in the catalytic mechanism.

The protein belongs to the uracil-DNA glycosylase (UDG) superfamily. UNG family.

The protein localises to the cytoplasm. It carries out the reaction Hydrolyzes single-stranded DNA or mismatched double-stranded DNA and polynucleotides, releasing free uracil.. Its function is as follows. Excises uracil residues from the DNA which can arise as a result of misincorporation of dUMP residues by DNA polymerase or due to deamination of cytosine. The chain is Uracil-DNA glycosylase from Bacillus cereus (strain G9842).